We begin with the raw amino-acid sequence, 229 residues long: Lipoprotein-releasing system ATP-binding protein LolD (229 aa).

Residues 9–228 enclose the ABC transporter domain; sequence HGLRKIYREA…QDGNLVQVEV (220 aa). 42–49 lines the ATP pocket; it reads GSSGSGKS.

It belongs to the ABC transporter superfamily. Lipoprotein translocase (TC 3.A.1.125) family. In terms of assembly, the complex is composed of two ATP-binding proteins (LolD) and two transmembrane proteins (LolC and LolE).

The protein localises to the cell inner membrane. Functionally, part of the ABC transporter complex LolCDE involved in the translocation of mature outer membrane-directed lipoproteins, from the inner membrane to the periplasmic chaperone, LolA. Responsible for the formation of the LolA-lipoprotein complex in an ATP-dependent manner. The protein is Lipoprotein-releasing system ATP-binding protein LolD of Photobacterium profundum (strain SS9).